A 374-amino-acid polypeptide reads, in one-letter code: Anthranilate O-methyltransferase 2 (374 aa).

Y18 is a binding site for S-adenosyl-L-homocysteine. Q25 lines the anthranilate pocket. C59, N64, D98, L99, S142, and Y143 together coordinate S-adenosyl-L-homocysteine. W164 serves as a coordination point for anthranilate. Positions 261 and 263 each coordinate Mg(2+).

It belongs to the methyltransferase superfamily. Type-7 methyltransferase family. SABATH subfamily.

The enzyme catalyses anthranilate + S-adenosyl-L-methionine = O-methyl anthranilate + S-adenosyl-L-homocysteine. Its function is as follows. Methyltransferase involved in the biosynthesis of methyl anthranilate in response to stresses. Utilizes anthranilic acid as substrate. Produces exclusively the O-methyl ester. The polypeptide is Anthranilate O-methyltransferase 2 (AAMT2) (Zea mays (Maize)).